We begin with the raw amino-acid sequence, 342 residues long: Methionyl-tRNA formyltransferase (342 aa).

110–113 contacts (6S)-5,6,7,8-tetrahydrofolate; it reads SLLP.

The protein belongs to the Fmt family.

It catalyses the reaction L-methionyl-tRNA(fMet) + (6R)-10-formyltetrahydrofolate = N-formyl-L-methionyl-tRNA(fMet) + (6S)-5,6,7,8-tetrahydrofolate + H(+). Functionally, attaches a formyl group to the free amino group of methionyl-tRNA(fMet). The formyl group appears to play a dual role in the initiator identity of N-formylmethionyl-tRNA by promoting its recognition by IF2 and preventing the misappropriation of this tRNA by the elongation apparatus. The protein is Methionyl-tRNA formyltransferase of Synechococcus sp. (strain CC9311).